The chain runs to 190 residues: Glutathione peroxidase 2 (190 aa).

Selenocysteine 40 is an active-site residue. Selenocysteine 40 is a non-standard amino acid (selenocysteine).

It belongs to the glutathione peroxidase family. In terms of assembly, homotetramer.

It is found in the cytoplasm. It localises to the cytosol. The catalysed reaction is 2 glutathione + H2O2 = glutathione disulfide + 2 H2O. It carries out the reaction a hydroperoxy polyunsaturated fatty acid + 2 glutathione = a hydroxy polyunsaturated fatty acid + glutathione disulfide + H2O. It catalyses the reaction tert-butyl hydroperoxide + 2 glutathione = tert-butanol + glutathione disulfide + H2O. The enzyme catalyses cumene hydroperoxide + 2 glutathione = 2-phenylpropan-2-ol + glutathione disulfide + H2O. The catalysed reaction is (13S)-hydroperoxy-(9Z,11E)-octadecadienoate + 2 glutathione = (13S)-hydroxy-(9Z,11E)-octadecadienoate + glutathione disulfide + H2O. It carries out the reaction (5S)-hydroperoxy-(6E,8Z,11Z,14Z)-eicosatetraenoate + 2 glutathione = (5S)-hydroxy-(6E,8Z,11Z,14Z)-eicosatetraenoate + glutathione disulfide + H2O. It catalyses the reaction (12R)-hydroperoxy-(5Z,8Z,10E,14Z)-eicosatetraenoate + 2 glutathione = (12R)-hydroxy-(5Z,8Z,10E,14Z)-eicosatetraenoate + glutathione disulfide + H2O. The enzyme catalyses (15S)-hydroperoxy-(5Z,8Z,11Z,13E)-eicosatetraenoate + 2 glutathione = (15S)-hydroxy-(5Z,8Z,11Z,13E)-eicosatetraenoate + glutathione disulfide + H2O. In terms of biological role, catalyzes the reduction of hydroperoxides in a glutathione-dependent manner thus regulating cellular redox homeostasis. Can reduce small soluble hydroperoxides such as H2O2, cumene hydroperoxide and tert-butyl hydroperoxide, as well as several fatty acid-derived hydroperoxides. Cannot reduce phosphatidycholine hydroperoxide. In Pongo pygmaeus (Bornean orangutan), this protein is Glutathione peroxidase 2 (GPX2).